The following is a 101-amino-acid chain: Urease subunit beta (101 aa).

It belongs to the urease beta subunit family. As to quaternary structure, heterotrimer of UreA (gamma), UreB (beta) and UreC (alpha) subunits. Three heterotrimers associate to form the active enzyme.

The protein resides in the cytoplasm. The enzyme catalyses urea + 2 H2O + H(+) = hydrogencarbonate + 2 NH4(+). Its pathway is nitrogen metabolism; urea degradation; CO(2) and NH(3) from urea (urease route): step 1/1. The polypeptide is Urease subunit beta (Stutzerimonas stutzeri (strain A1501) (Pseudomonas stutzeri)).